A 502-amino-acid polypeptide reads, in one-letter code: Neuronal acetylcholine receptor subunit alpha-7 (502 aa).

Residues 1–23 (MGLRALMLWLLAAAGLVRESLQG) form the signal peptide. The Extracellular segment spans residues 24 to 233 (EFQRKLYKEL…VTMRRRTLYY (210 aa)). 2 residues coordinate Ca(2+): R42 and V44. N-linked (GlcNAc...) asparagine glycans are attached at residues N46, N90, and N133. C150 and C164 are joined by a disulfide. Residues T172 and Y210 each contribute to the Ca(2+) site. C212 and C213 are oxidised to a cystine. The next 3 membrane-spanning stretches (helical) occupy residues 234–254 (GLNL…VFLL), 262–282 (ISLG…VAEI), and 295–315 (QYFA…VIVL). The Cytoplasmic segment spans residues 316–469 (QYHHHDPDGG…WKFAASVVDR (154 aa)). A helical membrane pass occupies residues 470–490 (LCLMAFSVFTIICTIGILMSA).

It belongs to the ligand-gated ion channel (TC 1.A.9) family. Acetylcholine receptor (TC 1.A.9.1) subfamily. Alpha-7/CHRNA7 sub-subfamily. Homopentamer. Can also form heteropentamers with CHRNB2, mainly found in basal forebrain cholinergic neurons.

The protein resides in the postsynaptic cell membrane. It localises to the cell membrane. It catalyses the reaction Ca(2+)(in) = Ca(2+)(out). The catalysed reaction is K(+)(in) = K(+)(out). The enzyme catalyses Na(+)(in) = Na(+)(out). It carries out the reaction choline(out) = choline(in). It catalyses the reaction NH4(+)(in) = NH4(+)(out). The catalysed reaction is L-arginine(in) = L-arginine(out). The enzyme catalyses guanidine(out) = guanidine(in). Activated by a myriad of ligands such as acetylcholine, cytisine, nicotine, choline and epibatidine. Activity is modulated by positive allosteric modulators (PAMs), such as flavonoids, with a wide range of chemical diversity, pharmacological sensitivity and efficacy. AChR activity is inhibited by the antagonists alpha-conotoxons RgIA, ImI and ImII, small disulfide-constrained peptides from cone snails. Its function is as follows. Component of neuronal acetylcholine receptors (nAChRs) that function as pentameric, ligand-gated cation channels with high calcium permeability among other activities. nAChRs are excitatory neurotrasnmitter receptors formed by a collection of nAChR subunits known to mediate synaptic transmission in the nervous system and the neuromuscular junction. Each nAchR subunit confers differential attributes to channel properties, including activation, deactivation and desensitization kinetics, pH sensitivity, cation permeability, and binding to allosteric modulators. CHRNA7 is an homooligomeric neuronal acetylcholine receptor abundantly expressed in the central nervous system. Characterized by a fast desensitization and high calcium permeability. Also expressed in non-neuronal cells such as immune cells like lymphocytes, monocytes and macrophages. This chain is Neuronal acetylcholine receptor subunit alpha-7 (CHRNA7), found in Gallus gallus (Chicken).